Reading from the N-terminus, the 211-residue chain is Nucleoside triphosphate pyrophosphatase (211 aa).

The Proton acceptor role is filled by aspartate 78.

It belongs to the Maf family. The cofactor is a divalent metal cation.

It is found in the cytoplasm. The enzyme catalyses a ribonucleoside 5'-triphosphate + H2O = a ribonucleoside 5'-phosphate + diphosphate + H(+). The catalysed reaction is a 2'-deoxyribonucleoside 5'-triphosphate + H2O = a 2'-deoxyribonucleoside 5'-phosphate + diphosphate + H(+). Its function is as follows. Nucleoside triphosphate pyrophosphatase. May have a dual role in cell division arrest and in preventing the incorporation of modified nucleotides into cellular nucleic acids. This Mycolicibacterium smegmatis (strain ATCC 700084 / mc(2)155) (Mycobacterium smegmatis) protein is Nucleoside triphosphate pyrophosphatase.